The chain runs to 177 residues: Interleukin-1 receptor antagonist protein (177 aa).

An N-terminal signal peptide occupies residues 1 to 25 (MEIRRRSVRHLISLLLFLFYSETAC). Cys91 and Cys141 are oxidised to a cystine. Asn109 carries an N-linked (GlcNAc...) asparagine glycan.

It belongs to the IL-1 family.

Its subcellular location is the secreted. In terms of biological role, anti-inflammatory antagonist of interleukin-1 family of proinflammatory cytokines such as interleukin-1beta/IL1B and interleukin-1alpha/IL1A. Protects from immune dysregulation and uncontrolled systemic inflammation triggered by IL1 for a range of innate stimulatory agents such as pathogens. The protein is Interleukin-1 receptor antagonist protein (IL1RN) of Equus caballus (Horse).